A 976-amino-acid chain; its full sequence is Protein phosphatase 1 regulatory subunit 12B (976 aa).

Basic and acidic residues predominate over residues 1–24; the sequence is MAELEHLGGKRAESARARRAEQLR. The tract at residues 1–52 is disordered; it reads MAELEHLGGKRAESARARRAEQLRRWRGSLTEQEPAERQGAGRQLQTRRGSP. Ser29 carries the phosphoserine modification. 5 ANK repeats span residues 57–86, 90–119, 123–152, 216–245, and 249–278; these read EDGAVFLAACSSGDTDEVKKLLARGADINT, DGLTALHQACIDENLDMVKFLVENRANVNQ, EGWTPLHAAASCGYLNIAEYFISHGASVGI, SGATALHVAAAKGYSEVLRLLIQAGYELNV, and DGWTPLHAAAHWGVKEACSILAEALCDMDI. A disordered region spans residues 342–489; that stretch reads EEIPKSQDTE…LDDKDKEREN (148 aa). Positions 362 to 374 are enriched in acidic residues; it reads SEEEEGEDEVSES. The span at 375–385 shows a compositional bias: basic and acidic residues; that stretch reads ETEKEADKKPE. Over residues 411–423 the composition is skewed to low complexity; it reads FSASSARRLSSLF. Thr444 carries the post-translational modification Phosphothreonine. Residues 465-477 show a composition bias toward low complexity; the sequence is SSIYRSSSSPRIS. Positions 480–489 are enriched in basic and acidic residues; it reads LDDKDKEREN. At Ser502 the chain carries Phosphoserine. A disordered region spans residues 503–873; it reads STSDIEEKEN…LTSRVEEDSN (371 aa). Polar residues predominate over residues 538–564; it reads ETPQTIAPSTYTSTYLKRTPYKSQADS. Positions 622–631 are enriched in basic and acidic residues; that stretch reads VRDEEAESLR. Positions 632–642 are enriched in basic residues; sequence KARSRQARQTR. Thr645 carries the post-translational modification Phosphothreonine. Positions 655–679 are enriched in basic and acidic residues; sequence EAEKTFSRSRAERQAQEQPGEKLED. 2 stretches are compositionally biased toward polar residues: residues 722 to 739 and 747 to 763; these read DKPTTPVSPSASRPSLYT and SRASGPDSENSETSTHA. A compositionally biased stretch (basic and acidic residues) spans 765–777; that stretch reads AAKEMDTSEKGEA. Over residues 791–801 the composition is skewed to basic residues; sequence ERRRAKDRRRG. Thr802 bears the Phosphothreonine mark. The span at 818 to 830 shows a compositional bias: basic and acidic residues; the sequence is EEVKEALHERLSR. Residue Ser833 is modified to Phosphoserine. Positions 844 to 860 are enriched in basic and acidic residues; it reads YSDRASARARREAREAR. Position 941 is a phosphoserine (Ser941).

PP1 comprises a catalytic subunit, PPP1CA, PPP1CB or PPP1CC, and one or several targeting or regulatory subunits. PPP1R12B mediates binding to myosin. Isoform 3 and isoform 4 bind PPP1R12A, but not isoform 1 of PPP1R12B itself. Binds IL16.

The protein localises to the cytoplasm. It is found in the cytoskeleton. It localises to the stress fiber. In terms of biological role, regulates myosin phosphatase activity. Augments Ca(2+) sensitivity of the contractile apparatus. This chain is Protein phosphatase 1 regulatory subunit 12B (Ppp1r12b), found in Mus musculus (Mouse).